The sequence spans 146 residues: 3-hydroxyacyl-[acyl-carrier-protein] dehydratase FabZ (146 aa).

Residue His49 is part of the active site.

This sequence belongs to the thioester dehydratase family. FabZ subfamily.

The protein localises to the cytoplasm. It carries out the reaction a (3R)-hydroxyacyl-[ACP] = a (2E)-enoyl-[ACP] + H2O. Involved in unsaturated fatty acids biosynthesis. Catalyzes the dehydration of short chain beta-hydroxyacyl-ACPs and long chain saturated and unsaturated beta-hydroxyacyl-ACPs. The protein is 3-hydroxyacyl-[acyl-carrier-protein] dehydratase FabZ of Pseudomonas putida (strain ATCC 700007 / DSM 6899 / JCM 31910 / BCRC 17059 / LMG 24140 / F1).